A 220-amino-acid chain; its full sequence is Ribose-5-phosphate isomerase A (220 aa).

Substrate-binding positions include 28 to 31, 81 to 84, and 94 to 97; these read TGST, DGAD, and KGGG. The Proton acceptor role is filled by E103. K121 provides a ligand contact to substrate.

The protein belongs to the ribose 5-phosphate isomerase family. Homodimer.

It carries out the reaction aldehydo-D-ribose 5-phosphate = D-ribulose 5-phosphate. It functions in the pathway carbohydrate degradation; pentose phosphate pathway; D-ribose 5-phosphate from D-ribulose 5-phosphate (non-oxidative stage): step 1/1. In terms of biological role, catalyzes the reversible conversion of ribose-5-phosphate to ribulose 5-phosphate. The polypeptide is Ribose-5-phosphate isomerase A (Yersinia enterocolitica serotype O:8 / biotype 1B (strain NCTC 13174 / 8081)).